Here is a 446-residue protein sequence, read N- to C-terminus: Lysine histidine transporter 1 (446 aa).

Over 1-37 (MVAQAPHDDHQDDEKLAAARQKEIEDWLPITSSRNAK) the chain is Cytoplasmic. The helical transmembrane segment at 38–58 (WWYSAFHNVTAMVGAGVLGLP) threads the bilayer. Residues 59 to 63 (YAMSQ) lie on the Extracellular side of the membrane. Residues 64-84 (LGWGPGIAVLVLSWVITLYTL) form a helical membrane-spanning segment. Topologically, residues 85-115 (WQMVEMHEMVPGKRFDRYHELGQHAFGEKLG) are cytoplasmic. Residues 116–136 (LYIVVPQQLIVEIGVCIVYMV) form a helical membrane-spanning segment. Topologically, residues 137 to 157 (TGGKSLKKFHELVCDDCKPIK) are extracellular. A helical transmembrane segment spans residues 158 to 178 (LTYFIMIFASVHFVLSHLPNF). The Cytoplasmic portion of the chain corresponds to 179-180 (NS). The chain crosses the membrane as a helical span at residues 181 to 201 (ISGVSLAAAVMSLSYSTIAWA). Over 202 to 227 (SSASKGVQEDVQYGYKAKTTAGTVFN) the chain is Extracellular. The chain crosses the membrane as a helical span at residues 228 to 248 (FFSGLGDVAFAYAGHNVVLEI). Residues 249–268 (QATIPSTPEKPSKGPMWRGV) lie on the Cytoplasmic side of the membrane. A helical membrane pass occupies residues 269–289 (IVAYIVVALCYFPVALVGYYI). Over 290–305 (FGNGVEDNILMSLKKP) the chain is Extracellular. A helical transmembrane segment spans residues 306-326 (AWLIATANIFVVIHVIGSYQI). The Cytoplasmic portion of the chain corresponds to 327-352 (YAMPVFDMMETLLVKKLNFRPTTTLR). A helical membrane pass occupies residues 353 to 375 (FFVRNFYVAATMFVGMTFPFFGG). Over 376-378 (LLA) the chain is Extracellular. The helical transmembrane segment at 379–401 (FFGGFAFAPTTYFLPCVIWLAIY) threads the bilayer. The Cytoplasmic segment spans residues 402-409 (KPKKYSLS). The chain crosses the membrane as a helical span at residues 410 to 430 (WWANWVCIVFGLFLMVLSPIG). Residues 431-446 (GLRTIVIQAKGYKFYS) lie on the Extracellular side of the membrane.

It belongs to the amino acid/polyamine transporter 2 family. Amino acid/auxin permease (AAAP) (TC 2.A.18.2) subfamily. In terms of tissue distribution, expressed in roots, stems, flowers, leaves, siliques and pollen. Found in the tips of roots and in the rhizodermis of emerging roots and in lateral roots. Higher expression in older leaves as compared to joung leaves. Detected first at the hydathodes, then in the epidermis and finally in matures leaves in all mesophyll cells. Not detected in vascular bundles or in seeds.

The protein localises to the cell membrane. With respect to regulation, inhibited by carbonlycyanide m-chlorophenylhydrazone (CCCP) and DEPC. In terms of biological role, amino acid-proton symporter. Transporter with a broad specificity for histidine, lysine, glutamic acid, alanine, serine, proline and glycine. Involved in both apoplastic transport of amino acids in leaves and their uptake by roots. This Arabidopsis thaliana (Mouse-ear cress) protein is Lysine histidine transporter 1 (LHT1).